Here is a 284-residue protein sequence, read N- to C-terminus: Nucleotide-binding protein in ptsO 5'region (284 aa).

Position 8–15 (8–15 (GRSGSGKS)) interacts with ATP. 60–63 (DARN) is a GTP binding site.

The protein belongs to the RapZ-like family.

Functionally, displays ATPase and GTPase activities. The protein is Nucleotide-binding protein in ptsO 5'region of Pseudomonas putida (Arthrobacter siderocapsulatus).